Reading from the N-terminus, the 124-residue chain is Urotensin-2 (124 aa).

A signal peptide spans 1-20 (MYKLASCCLLFIGFLNPLLS). The propeptide occupies 21–110 (LPLLDSREIS…HLLARIWKPY (90 aa)). Cys118 and Cys123 are disulfide-bonded.

It belongs to the urotensin-2 family. In terms of tissue distribution, brain specific.

It localises to the secreted. Highly potent vasoconstrictor. This is Urotensin-2 (UTS2) from Homo sapiens (Human).